Reading from the N-terminus, the 399-residue chain is MKRTHLFIVGIYFLSSCRAEEGLNFPTYDGKDRVVSLSEKNFKQVLKKYDLLCLYYHEPVSSDKVTQKQFQLKEIVLELVAQVLEHKAIGFVMVDAKKEAKLAKKLGFDEEGSLYILKGDRTIEFDGEFAADVLVEFLLDLIEDPVEIISSKLEVQAFERIEDYIKLIGFFKSEDSEYYKAFEEAAEHFQPYIKFFATFDKGVAKKLSLKMNEVDFYEPFMDEPIAIPNKPYTEEELVEFVKEHQRPTLRRLRPEEMFETWEDDLNGIHIVAFAEKSDPDGYEFLEILKQVARDNTDNPDLSILWIDPDDFPLLVAYWEKTFKIDLFRPQIGVVNVTDADSVWMEIPDDDDLPTAEELEDWIEDVLSGKINTEDDDEDDDDDDNSDEEDNDDSDDDDDE.

Positions 1–19 (MKRTHLFIVGIYFLSSCRA) are cleaved as a signal peptide. Tyr282 bears the Phosphotyrosine mark. Asn335 carries N-linked (GlcNAc...) asparagine glycosylation. Positions 365 to 399 (VLSGKINTEDDDEDDDDDDNSDEEDNDDSDDDDDE) are disordered. The segment covering 373-399 (EDDDEDDDDDDNSDEEDNDDSDDDDDE) has biased composition (acidic residues). Ser385 and Ser393 each carry phosphoserine.

It belongs to the calsequestrin family. As to quaternary structure, monomer, homodimer and homooligomer. Mostly monomeric in the absence of calcium. Forms higher oligomers in a calcium-dependent manner. Dimers associate to form tetramers, that then form linear homomer chains. Interacts with ASPH and TRDN. Phosphorylation in the C-terminus, probably by CK2, moderately increases calcium buffering capacity. In terms of processing, N-glycosylated.

It is found in the sarcoplasmic reticulum lumen. Functionally, calsequestrin is a high-capacity, moderate affinity, calcium-binding protein and thus acts as an internal calcium store in muscle. Calcium ions are bound by clusters of acidic residues at the protein surface, especially at the interface between subunits. Can bind around 60 Ca(2+) ions. Regulates the release of lumenal Ca(2+) via the calcium release channel RYR2; this plays an important role in triggering muscle contraction. Plays a role in excitation-contraction coupling in the heart and in regulating the rate of heart beats. The protein is Calsequestrin-2 (CASQ2) of Homo sapiens (Human).